We begin with the raw amino-acid sequence, 86 residues long: Cell division topological specificity factor (86 aa).

Belongs to the MinE family.

Its function is as follows. Prevents the cell division inhibition by proteins MinC and MinD at internal division sites while permitting inhibition at polar sites. This ensures cell division at the proper site by restricting the formation of a division septum at the midpoint of the long axis of the cell. The chain is Cell division topological specificity factor from Photobacterium profundum (strain SS9).